Consider the following 597-residue polypeptide: ATP-dependent lipid A-core flippase (597 aa).

Helical transmembrane passes span 26-46 (LWPYIKPLIWVLIGAIVAMAV), 76-96 (WFVPAAVIGLALIRSLSQYAS), 138-158 (AIVFEVNQILNVLLSVLVTLV), 164-184 (VVFLLGYLFYLNWRLTLIVAV), 263-283 (QPLTQFLASIALAVVITIAVV), and 292-312 (VGGFVAFVTSMLLIISPLKHL). In terms of domain architecture, ABC transmembrane type-1 spans 38–321 (IGAIVAMAVS…LMDVNQPLQR (284 aa)). The ABC transporter domain maps to 353 to 590 (VEFRDVSFVY…DGLYAHLHRI (238 aa)). Residue 390–397 (GPSGSGKT) participates in ATP binding.

It belongs to the ABC transporter superfamily. Lipid exporter (TC 3.A.1.106) family. Homodimer.

The protein resides in the cell inner membrane. The catalysed reaction is ATP + H2O + lipid A-core oligosaccharideSide 1 = ADP + phosphate + lipid A-core oligosaccharideSide 2.. In terms of biological role, involved in lipopolysaccharide (LPS) biosynthesis. Translocates lipid A-core from the inner to the outer leaflet of the inner membrane. Transmembrane domains (TMD) form a pore in the inner membrane and the ATP-binding domain (NBD) is responsible for energy generation. The chain is ATP-dependent lipid A-core flippase from Paraburkholderia xenovorans (strain LB400).